Reading from the N-terminus, the 441-residue chain is Ribulose bisphosphate carboxylase large chain (441 aa).

At Lys-5 the chain carries N6,N6,N6-trimethyllysine. 2 residues coordinate substrate: Asn-114 and Thr-164. The active-site Proton acceptor is Lys-166. Lys-168 provides a ligand contact to substrate. Positions 192, 194, and 195 each coordinate Mg(2+). Lys-192 bears the N6-carboxylysine mark. The Proton acceptor role is filled by His-285. Substrate contacts are provided by Arg-286, His-318, and Ser-370.

The protein belongs to the RuBisCO large chain family. Type I subfamily. As to quaternary structure, heterohexadecamer of 8 large chains and 8 small chains; disulfide-linked. The disulfide link is formed within the large subunit homodimers. It depends on Mg(2+) as a cofactor. In terms of processing, the disulfide bond which can form in the large chain dimeric partners within the hexadecamer appears to be associated with oxidative stress and protein turnover.

The protein localises to the plastid. It localises to the chloroplast. The catalysed reaction is 2 (2R)-3-phosphoglycerate + 2 H(+) = D-ribulose 1,5-bisphosphate + CO2 + H2O. The enzyme catalyses D-ribulose 1,5-bisphosphate + O2 = 2-phosphoglycolate + (2R)-3-phosphoglycerate + 2 H(+). RuBisCO catalyzes two reactions: the carboxylation of D-ribulose 1,5-bisphosphate, the primary event in carbon dioxide fixation, as well as the oxidative fragmentation of the pentose substrate in the photorespiration process. Both reactions occur simultaneously and in competition at the same active site. This is Ribulose bisphosphate carboxylase large chain from Glycyrrhiza echinata (Licorice).